A 394-amino-acid polypeptide reads, in one-letter code: Chaperone protein DnaJ (394 aa).

In terms of domain architecture, J spans 5 to 75 (DYYEVLGVDK…EKKQQYDQFG (71 aa)). The segment at 150–231 (GVEKTIKYKR…CRGTGTAKET (82 aa)) adopts a CR-type zinc-finger fold. Residues C163, C166, C179, C182, C205, C208, C219, and C222 each coordinate Zn(2+). CXXCXGXG motif repeat units follow at residues 163-170 (CEHCHGTG), 179-186 (CPTCNGQG), 205-212 (CPDCHGTG), and 219-226 (CKHCRGTG).

This sequence belongs to the DnaJ family. In terms of assembly, homodimer. Zn(2+) is required as a cofactor.

The protein localises to the cytoplasm. Participates actively in the response to hyperosmotic and heat shock by preventing the aggregation of stress-denatured proteins and by disaggregating proteins, also in an autonomous, DnaK-independent fashion. Unfolded proteins bind initially to DnaJ; upon interaction with the DnaJ-bound protein, DnaK hydrolyzes its bound ATP, resulting in the formation of a stable complex. GrpE releases ADP from DnaK; ATP binding to DnaK triggers the release of the substrate protein, thus completing the reaction cycle. Several rounds of ATP-dependent interactions between DnaJ, DnaK and GrpE are required for fully efficient folding. Also involved, together with DnaK and GrpE, in the DNA replication of plasmids through activation of initiation proteins. The chain is Chaperone protein DnaJ from Fusobacterium nucleatum subsp. polymorphum (Fusobacterium polymorphum).